We begin with the raw amino-acid sequence, 310 residues long: Malate dehydrogenase (310 aa).

NAD(+) is bound by residues 7 to 13 (GAAGGIG) and aspartate 34. Substrate-binding residues include arginine 81 and arginine 87. NAD(+) contacts are provided by residues asparagine 94 and 117-119 (ITN). Substrate contacts are provided by asparagine 119 and arginine 153. The active-site Proton acceptor is histidine 177. An NAD(+)-binding site is contributed by methionine 227.

The protein belongs to the LDH/MDH superfamily. MDH type 1 family. As to quaternary structure, homodimer.

The catalysed reaction is (S)-malate + NAD(+) = oxaloacetate + NADH + H(+). In terms of biological role, catalyzes the reversible oxidation of malate to oxaloacetate. This Vibrio vulnificus (strain YJ016) protein is Malate dehydrogenase.